The sequence spans 81 residues: Large ribosomal subunit protein bL31B (81 aa).

This sequence belongs to the bacterial ribosomal protein bL31 family. Type B subfamily. Part of the 50S ribosomal subunit.

This Bdellovibrio bacteriovorus (strain ATCC 15356 / DSM 50701 / NCIMB 9529 / HD100) protein is Large ribosomal subunit protein bL31B.